The sequence spans 63 residues: Large ribosomal subunit protein uL29 (63 aa).

Belongs to the universal ribosomal protein uL29 family.

This is Large ribosomal subunit protein uL29 from Actinobacillus succinogenes (strain ATCC 55618 / DSM 22257 / CCUG 43843 / 130Z).